The chain runs to 385 residues: Rhomboid domain-containing protein 3 (385 aa).

A run of 5 helical transmembrane segments spans residues 13-33, 58-78, 95-115, 146-166, and 168-188; these read ALPL…LLGA, LGHT…TLGW, VLAL…VSGA, WLLP…PPFL, and LLCG…WLEL. Residues 238-264 form a disordered region; it reads PPYLASSDSWPHSDGSAQLPPRLGPGQ. Residues 322–361 form the UBA domain; sequence SVSSLRLQQLQHMGFPTEQAAVALAATGRVEGAVSLLVEG.

Its subcellular location is the membrane. The sequence is that of Rhomboid domain-containing protein 3 (Rhbdd3) from Mus musculus (Mouse).